A 474-amino-acid chain; its full sequence is Glutamate--tRNA ligase (474 aa).

Residues 10-20 (PSPTGYLHIGG) carry the 'HIGH' region motif. Positions 107, 109, 134, and 136 each coordinate Zn(2+). A 'KMSKS' region motif is present at residues 244 to 248 (RLSKR). Lysine 247 contributes to the ATP binding site.

It belongs to the class-I aminoacyl-tRNA synthetase family. Glutamate--tRNA ligase type 1 subfamily. In terms of assembly, monomer. Requires Zn(2+) as cofactor.

The protein localises to the cytoplasm. The catalysed reaction is tRNA(Glu) + L-glutamate + ATP = L-glutamyl-tRNA(Glu) + AMP + diphosphate. Catalyzes the attachment of glutamate to tRNA(Glu) in a two-step reaction: glutamate is first activated by ATP to form Glu-AMP and then transferred to the acceptor end of tRNA(Glu). The protein is Glutamate--tRNA ligase of Anaeromyxobacter dehalogenans (strain 2CP-C).